We begin with the raw amino-acid sequence, 509 residues long: Serine/threonine protein kinase OSK4 (509 aa).

A Protein kinase domain is found at 17-269 (YNLGRTLGIG…IREIREHQWF (253 aa)). ATP contacts are provided by residues 23–31 (LGIGSFGKV) and lysine 46. Aspartate 140 (proton acceptor) is an active-site residue. In terms of domain architecture, UBA spans 290–330 (MIDEDTLQDVVNLGYEKDHVCESLRNRLQNEATVAYYLLLD). Residues 460–508 (NGRLPAVIKFEIQLYKSRDEKYLLDMQRVTGPQLLFLDFCAAFLTKLRV) enclose the KA1 domain.

It belongs to the protein kinase superfamily. Ser/Thr protein kinase family. Interacts with HDR1. In terms of tissue distribution, strongly expressed in immature seeds. Mostly expressed in panicles, leaf sheaths and roots, and to a lower extent, in germinating seeds and leaf blades.

Its subcellular location is the nucleus. It catalyses the reaction L-seryl-[protein] + ATP = O-phospho-L-seryl-[protein] + ADP + H(+). The catalysed reaction is L-threonyl-[protein] + ATP = O-phospho-L-threonyl-[protein] + ADP + H(+). Functionally, suppressor of flowering in long days (LD) via the that up-regulation of HD1 and the down-regulation of EHD1. Can phosphorylate HD1 in the presence of HDR1. This Oryza sativa subsp. indica (Rice) protein is Serine/threonine protein kinase OSK4.